We begin with the raw amino-acid sequence, 274 residues long: Large ribosomal subunit protein uL2 (274 aa).

The interval 224–274 (VAMNPVDHPHGGGEGRTSGGRHPVTPWGIPTKGYKTRRNKRSNKLIVQKRK) is disordered. Over residues 257 to 274 (YKTRRNKRSNKLIVQKRK) the composition is skewed to basic residues.

Belongs to the universal ribosomal protein uL2 family. As to quaternary structure, part of the 50S ribosomal subunit. Forms a bridge to the 30S subunit in the 70S ribosome.

In terms of biological role, one of the primary rRNA binding proteins. Required for association of the 30S and 50S subunits to form the 70S ribosome, for tRNA binding and peptide bond formation. It has been suggested to have peptidyltransferase activity; this is somewhat controversial. Makes several contacts with the 16S rRNA in the 70S ribosome. This Francisella tularensis subsp. mediasiatica (strain FSC147) protein is Large ribosomal subunit protein uL2.